The chain runs to 512 residues: GMP synthase [glutamine-hydrolyzing] (512 aa).

The Glutamine amidotransferase type-1 domain maps to 7 to 197 (TIIVLDFGSQ…VFGVCGCSEG (191 aa)). The active-site Nucleophile is C84. Active-site residues include H171 and E173. The 190-residue stretch at 198 to 387 (WNMENFIEVE…LGIPDEIVWR (190 aa)) folds into the GMPS ATP-PPase domain. Residue 225–231 (SGGVDSS) participates in ATP binding.

Homodimer.

It catalyses the reaction XMP + L-glutamine + ATP + H2O = GMP + L-glutamate + AMP + diphosphate + 2 H(+). It functions in the pathway purine metabolism; GMP biosynthesis; GMP from XMP (L-Gln route): step 1/1. Functionally, catalyzes the synthesis of GMP from XMP. The protein is GMP synthase [glutamine-hydrolyzing] of Bacillus cytotoxicus (strain DSM 22905 / CIP 110041 / 391-98 / NVH 391-98).